Here is a 252-residue protein sequence, read N- to C-terminus: 5-oxoprolinase subunit A (252 aa).

It belongs to the LamB/PxpA family. As to quaternary structure, forms a complex composed of PxpA, PxpB and PxpC.

It carries out the reaction 5-oxo-L-proline + ATP + 2 H2O = L-glutamate + ADP + phosphate + H(+). Catalyzes the cleavage of 5-oxoproline to form L-glutamate coupled to the hydrolysis of ATP to ADP and inorganic phosphate. This chain is 5-oxoprolinase subunit A, found in Mycobacterium marinum (strain ATCC BAA-535 / M).